The sequence spans 1194 residues: Multidrug efflux ATP-binding/permease protein BCG_0231 (1194 aa).

Transmembrane regions (helical) follow at residues 20–40, 56–76, 130–150, 153–173, 258–278, and 279–299; these read LLLG…VPLV, LAPW…LTYV, LLFD…GVAV, WLSV…GLIA, FALG…FVAF, and WACL…LTIA. The 281-residue stretch at 21-301 folds into the ABC transmembrane type-1 1 domain; the sequence is LLGFGAALAG…LAGMLTIAQQ (281 aa). The 235-residue stretch at 334 to 568 folds into the ABC transporter 1 domain; the sequence is LEFQRVSFGY…CPRYRELLSP (235 aa). 367 to 374 lines the ATP pocket; the sequence is GAPGSGKS. A run of 6 helical transmembrane segments spans residues 628–648, 660–680, 743–763, 765–785, 847–867, and 878–898; these read ALSL…PLLI, VLSA…IRWV, LVVA…LLAI, ARLV…TWQF, LLAL…TLVL, and VISV…YTPI. Residues 628–910 enclose the ABC transmembrane type-1 2 domain; sequence ALSLLLVAVQ…LAQMFDDYQR (283 aa). Residues 942–1177 form the ABC transporter 2 domain; sequence VVFDAVHYSY…GGHYSRLWAA (236 aa). Residue 976-983 coordinates ATP; that stretch reads GSTGSGKS.

This sequence belongs to the ABC transporter superfamily. Lipid exporter (TC 3.A.1.106) family.

It is found in the cell inner membrane. Overexpression increases resistance to chloramphenicol, ampicillin, streptomycin, tetracyclin and vancomycin. The polypeptide is Multidrug efflux ATP-binding/permease protein BCG_0231 (Mycobacterium bovis (strain BCG / Pasteur 1173P2)).